Here is an 821-residue protein sequence, read N- to C-terminus: Lysosomal beta glucosidase (821 aa).

An N-terminal signal peptide occupies residues 1-24; it reads MKTIKSLFLLSLLIVNLLISSTYG. A propeptide spanning residues 25-69 is cleaved from the precursor; it reads SSIRVSIVGGEEAEVIEKPRTFGNKRELKLEYSQIYPKKQLNQEN. Residues N113, N146, and N266 are each glycosylated (N-linked (GlcNAc...) asparagine). D363 is an active-site residue. Residues N535, N555, N703, and N721 are each glycosylated (N-linked (GlcNAc...) asparagine).

The protein belongs to the glycosyl hydrolase 3 family. In terms of processing, glycosylated. The polyoligosaccharides are of the high-mannose type and are highly substituted with both phosphate and sulfate moieties.

It localises to the lysosome. It carries out the reaction Hydrolysis of terminal, non-reducing beta-D-glucosyl residues with release of beta-D-glucose.. The chain is Lysosomal beta glucosidase (gluA) from Dictyostelium discoideum (Social amoeba).